The sequence spans 648 residues: MEHIQGAWKTISNGFGFKDAVFDGSSCISPTIVQQFGYQRRASDDGKLTDPSKTSNTIRVFLPNKQRTVVNVRNGMSLHDCLMKALKVRGLQPECCAVFRLLHEHKGKKARLDWNTDAASLIGEELQVDFLDHVPLTTHNFARKTFLKLAFCDICQKFLLNGFRCQTCGYKFHEHCSTKVPTMCVDWSNIRQLLLFPNSTIGDSGVPALPSLTMRRMRESVSRMPVSSQHRYSTPHAFTFNTSSPSSEGSLSQRQRSTSTPNVHMVSTTLPVDSRMIEDAIRSHSESASPSALSSSPNNLSPTGWSQPKTPVPAQRERAPVSGTQEKNKIRPRGQRDSSYYWEIEASEVMLSTRIGSGSFGTVYKGKWHGDVAVKILKVVDPTPEQFQAFRNEVAVLRKTRHVNILLFMGYMTKDNLAIVTQWCEGSSLYKHLHVQETKFQMFQLIDIARQTAQGMDYLHAKNIIHRDMKSNNIFLHEGLTVKIGDFGLATVKSRWSGSQQVEQPTGSVLWMAPEVIRMQDNNPFSFQSDVYSYGIVLYELMTGELPYSHINNRDQIIFMVGRGYASPDLSKLYKNCPKAMKRLVADCVKKVKEERPLFPQILSSIELLQHSLPKINRSASEPSLHRAAHTEDINACTLTTSPRLPVF.

A Phosphoserine; by MAPK1 modification is found at S29. The residue at position 43 (S43) is a Phosphoserine; by PKA and MAPK1. One can recognise an RBD domain in the interval 56–131 (NTIRVFLPNK…IGEELQVDFL (76 aa)). A Phorbol-ester/DAG-type zinc finger spans residues 138–184 (THNFARKTFLKLAFCDICQKFLLNGFRCQTCGYKFHEHCSTKVPTMC). Residues H139, C152, C155, C165, C168, H173, C176, and C184 each coordinate Zn(2+). A disordered region spans residues 220–334 (SVSRMPVSSQ…QEKNKIRPRG (115 aa)). The segment covering 239–271 (TFNTSSPSSEGSLSQRQRSTSTPNVHMVSTTLP) has biased composition (polar residues). S252 carries the phosphoserine modification. S259 carries the post-translational modification Phosphoserine; by PKA, PKC and PKB/AKT1. A Phosphothreonine; by autocatalysis modification is found at T268. Position 269 is a phosphothreonine; by PKA (T269). Residues 275–285 (RMIEDAIRSHS) are compositionally biased toward basic and acidic residues. Residues 286 to 301 (ESASPSALSSSPNNLS) show a composition bias toward low complexity. S289 is subject to Phosphoserine; by MAPK1. At S296 the chain carries Phosphoserine. S301 is subject to Phosphoserine; by MAPK1. Residues 331–349 (RPRGQRDSSYYWEIEASEV) are interaction with PEBP1/RKIP. Phosphoserine; by PAK1, PAK2, PAK3 and PAK5 is present on S338. At S339 the chain carries Phosphoserine; by PAK1, PAK2 and PAK3. 2 positions are modified to phosphotyrosine; by SRC: Y340 and Y341. One can recognise a Protein kinase domain in the interval 349 to 609 (VMLSTRIGSG…PQILSSIELL (261 aa)). ATP is bound by residues 355–363 (IGSGSFGTV) and K375. Catalysis depends on D468, which acts as the Proton acceptor. S471 bears the Phosphoserine mark. T491 is modified (phosphothreonine). S494 carries the phosphoserine modification. The residue at position 499 (S499) is a Phosphoserine; by PKC. R563 carries the post-translational modification Symmetric dimethylarginine; by PRMT5. At S621 the chain carries Phosphoserine. Residue S642 is modified to Phosphoserine; by MAPK1.

This sequence belongs to the protein kinase superfamily. TKL Ser/Thr protein kinase family. RAF subfamily. In terms of assembly, monomer. Homodimer. Heterodimerizes with BRAF and this heterodimer possesses a highly increased kinase activity compared to the respective homodimers or monomers. Heterodimerization is mitogen-regulated and enhanced by 14-3-3 proteins. MAPK1/ERK2 activation can induce a negative feedback that promotes the dissociation of the heterodimer. Forms a multiprotein complex with Ras (M-Ras/MRAS), SHOC2 and protein phosphatase 1 (PPP1CA, PPP1CB and PPP1CC). Interacts with LZTR1. Interacts with Ras proteins; the interaction is antagonized by RIN1. Weakly interacts with RIT1. Interacts (via N-terminus) with RGS14 (via RBD domains); the interaction mediates the formation of a ternary complex with BRAF, a ternary complex inhibited by GNAI1. Probably forms a complex composed of chaperones HSP90 and HSP70, co-chaperones CDC37, PPP5C, TSC1 and client protein TSC2, CDK4, AKT, RAF1 and NR3C1; this complex does not contain co-chaperones STIP1/HOP and PTGES3/p23. Interacts with STK3/MST2; the interaction inhibits its pro-apoptotic activity. Interacts (when phosphorylated at Ser-259) with YWHAZ (unphosphorylated at 'Thr-232'). Interacts with MAP2K1/MEK1 and MAP2K2/MEK2. Interacts with MAP3K5/ASF1 (via N-terminus) and this interaction inhibits the proapoptotic function of MAP3K5/ASK1. Interacts with PAK1 (via kinase domain). The phosphorylated form interacts with PIN1. The Ser-338 and Ser-339 phosphorylated form (by PAK1) interacts with BCL2. Interacts with PEBP1/RKIP and this interaction is enhanced if RAF1 is phosphorylated on residues Ser-338, Ser-339, Tyr-340 and Tyr-341. Interacts with ADCY2, ADCY5, ADCY6, DGKH, RCAN1/DSCR1, PPP1R12A, PKB/AKT1, PPP2CA, PPP2R1B, SPRY2, SPRY4, CNKSR1/CNK1, KSR2 and PHB/prohibitin. Interacts with ROCK2. In its active form, interacts with PRMT5. Interacts with FAM83B; displaces 14-3-3 proteins from RAF1 and activates RAF1. Interacts with PDE8A; the interaction promotes RAF1 activity. Interacts with MFHAS1. Interacts with GLS. Interacts with NEK10 and MAP2K1; the interaction is direct with NEK10 and required for ERK1/2-signaling pathway activation in response to UV irradiation. The cofactor is Zn(2+). Post-translationally, phosphorylation at Thr-269, Ser-338, Tyr-341, Thr-491 and Ser-494 results in its activation. Phosphorylation at Ser-29, Ser-43, Ser-289, Ser-296, Ser-301 and Ser-642 by MAPK1/ERK2 results in its inactivation. Phosphorylation at Ser-259 induces the interaction with YWHAZ and inactivates kinase activity. Dephosphorylation of Ser-259 by the SHOC2-MRAS-PP1c (SMP) complex consisting of SHOC2, GTP-bound M-Ras/MRAS and the catalytic subunit of protein phosphatase 1 (PPP1CA, PPP1CB or PPP1CC); this relieves inactivation and stimulates kinase activity. Phosphorylation at Ser-338 by PAK1 and PAK5 and Ser-339 by PAK1 is required for its mitochondrial localization. Phosphorylation at Ser-621 in response to growth factor treatment stabilizes the protein, possibly by preventing proteasomal degradation. Phosphorylation at Ser-289, Ser-296, Ser-301, Ser-338 and Ser-621 are somehow linked to the methylation potential of cells. Treatment of cells with HGF in the presence of the methylation inhibitor 5'-methylthioadenosine (MTA) results in increased phosphorylation at Ser-338 and Ser-621 and decreased phosphorylation at Ser-296, Ser-301 and Ser-338. Dephosphorylation at Ser-338 by PPP5C results in an activity decrease. In terms of processing, methylated at Arg-563 in response to EGF treatment. This modification leads to destabilization of the protein, possibly through proteasomal degradation. In skeletal muscle, isoform 1 is more abundant than isoform 2.

The protein resides in the cytoplasm. It is found in the cell membrane. Its subcellular location is the mitochondrion. The protein localises to the nucleus. The catalysed reaction is L-seryl-[protein] + ATP = O-phospho-L-seryl-[protein] + ADP + H(+). It carries out the reaction L-threonyl-[protein] + ATP = O-phospho-L-threonyl-[protein] + ADP + H(+). Regulation is a highly complex process involving membrane recruitment, protein-protein interactions, dimerization, and phosphorylation/dephosphorylation events. Ras-GTP recruits RAF1 to the membrane, thereby promoting its activation. The inactive conformation of RAF1 is maintained by autoinhibitory interactions occurring between the N-terminal regulatory and the C-terminal catalytic domains and by the binding of a 14-3-3 protein that contacts two phosphorylation sites, Ser-259 and Ser-621. Upon mitogenic stimulation, Ras and PPP2R1A cooperate to release autoinhibition and the subsequent phosphorylation of activating sites: Ser-338, Tyr-341, Thr-491, and Ser-494, yields a fully active kinase. Through a negative feedback mechanism involving MAPK1/ERK2, RAF1 is phosphorylated on Ser-29, Ser-43, Ser-289, Ser-296, Ser-301 and Ser-642 by MAPK1/ERK2, which yields an inactive, desensitized kinase. The signaling-competent conformation of RAF1 is finally re-established by the coordinated action of PIN1, a prolyl isomerase that converts pSer and pThr residues from the cis to the trans conformation, which is preferentially recognized and dephosphorylated by PPP2R1A. Activated by homodimerization and heterodimerization (with BRAF). Also regulated through association with other proteins such as KSR2, CNKSR1/CNK1, PEBP1/RKIP, PHB/prohibitin and SPRY4. PEBP1/RKIP acts by dissociating RAF1 from its substrates MAP2K1/MEK1 and MAP2K2/MEK2. PHB/prohibitin facilitates the displacement of 14-3-3 from RAF1 by activated Ras, thereby promoting cell membrane localization and phosphorylation of RAF1 at the activating Ser-338. SPRY4 inhibits Ras-independent, but not Ras-dependent, activation of RAF1. CNKSR1/CNK1 regulates Src-mediated RAF1 activation. Functionally, serine/threonine-protein kinase that acts as a regulatory link between the membrane-associated Ras GTPases and the MAPK/ERK cascade, and this critical regulatory link functions as a switch determining cell fate decisions including proliferation, differentiation, apoptosis, survival and oncogenic transformation. RAF1 activation initiates a mitogen-activated protein kinase (MAPK) cascade that comprises a sequential phosphorylation of the dual-specific MAPK kinases (MAP2K1/MEK1 and MAP2K2/MEK2) and the extracellular signal-regulated kinases (MAPK3/ERK1 and MAPK1/ERK2). The phosphorylated form of RAF1 (on residues Ser-338 and Ser-339, by PAK1) phosphorylates BAD/Bcl2-antagonist of cell death at 'Ser-75'. Phosphorylates adenylyl cyclases: ADCY2, ADCY5 and ADCY6, resulting in their activation. Phosphorylates PPP1R12A resulting in inhibition of the phosphatase activity. Phosphorylates TNNT2/cardiac muscle troponin T. Can promote NF-kB activation and inhibit signal transducers involved in motility (ROCK2), apoptosis (MAP3K5/ASK1 and STK3/MST2), proliferation and angiogenesis (RB1). Can protect cells from apoptosis also by translocating to the mitochondria where it binds BCL2 and displaces BAD/Bcl2-antagonist of cell death. Regulates Rho signaling and migration, and is required for normal wound healing. Plays a role in the oncogenic transformation of epithelial cells via repression of the TJ protein, occludin (OCLN) by inducing the up-regulation of a transcriptional repressor SNAI2/SLUG, which induces down-regulation of OCLN. Restricts caspase activation in response to selected stimuli, notably Fas stimulation, pathogen-mediated macrophage apoptosis, and erythroid differentiation. In Homo sapiens (Human), this protein is RAF proto-oncogene serine/threonine-protein kinase.